The following is a 941-amino-acid chain: Pre-mRNA-processing factor 6 (941 aa).

Residues 1 to 79 (MNKKKKPFLG…DEDLNDTNYD (79 aa)) are disordered. The span at 39 to 65 (DANDPVDDRHAPPGKRTVGDQMKKNQA) shows a compositional bias: basic and acidic residues. The segment covering 66 to 78 (ADDDDEDLNDTNY) has biased composition (acidic residues). Serine 143 carries the phosphoserine modification. Phosphothreonine occurs at positions 180, 266, and 275. Serine 279 bears the Phosphoserine mark. HAT repeat units lie at residues 384–416 (TDIR…LEEP), 418–444 (DARI…ARLE), 445–476 (TYEN…LEEA), 554–586 (NALE…FGKN), 588–620 (GTRE…SKWL), 622–654 (GDVP…LESE), 689–721 (DNIR…IEEQ), 723–755 (EMME…LEEK), and 855–887 (RKIT…FELQ).

Identified in the spliceosome B complex. Identified in the spliceosome C complex. Associates with the U5 snRNP particle. Component of the U4/U6-U5 tri-snRNP complex composed of the U4, U6 and U5 snRNAs and at least PRPF3, PRPF4, PRPF6, PRPF8, PRPF31, SNRNP200, TXNL4A, SNRNP40, DDX23, CD2BP2, PPIH, SNU13, EFTUD2, SART1 and USP39, LSm proteins LSm2-8 and Sm proteins. Interacts with ARAF1. Interacts with AR and NR3C1, but not ESR1, independently of the presence of hormones. Interacts with USH1G. Phosphorylated by PRP4K during spliceosome assembly.

The protein localises to the nucleus. Its subcellular location is the nucleoplasm. It is found in the nucleus speckle. Functionally, involved in pre-mRNA splicing as component of the U4/U6-U5 tri-snRNP complex, one of the building blocks of the spliceosome. Enhances dihydrotestosterone-induced transactivation activity of AR, as well as dexamethasone-induced transactivation activity of NR3C1, but does not affect estrogen-induced transactivation. In Pongo abelii (Sumatran orangutan), this protein is Pre-mRNA-processing factor 6 (PRPF6).